A 253-amino-acid polypeptide reads, in one-letter code: Imidazole glycerol phosphate synthase subunit HisF (253 aa).

Active-site residues include D11 and D130.

The protein belongs to the HisA/HisF family. Heterodimer of HisH and HisF.

It localises to the cytoplasm. It carries out the reaction 5-[(5-phospho-1-deoxy-D-ribulos-1-ylimino)methylamino]-1-(5-phospho-beta-D-ribosyl)imidazole-4-carboxamide + L-glutamine = D-erythro-1-(imidazol-4-yl)glycerol 3-phosphate + 5-amino-1-(5-phospho-beta-D-ribosyl)imidazole-4-carboxamide + L-glutamate + H(+). The protein operates within amino-acid biosynthesis; L-histidine biosynthesis; L-histidine from 5-phospho-alpha-D-ribose 1-diphosphate: step 5/9. IGPS catalyzes the conversion of PRFAR and glutamine to IGP, AICAR and glutamate. The HisF subunit catalyzes the cyclization activity that produces IGP and AICAR from PRFAR using the ammonia provided by the HisH subunit. The chain is Imidazole glycerol phosphate synthase subunit HisF from Dehalococcoides mccartyi (strain ATCC BAA-2100 / JCM 16839 / KCTC 5957 / BAV1).